We begin with the raw amino-acid sequence, 241 residues long: MADNKANKEQVHRVFQNISKKYDRLNNIISFEQHKVWRKRVMKDMGVRKGMKALDVCCGTGDWTIALSKAVGSTGEVTGIDFSENMLEVGKEKTASMENVKLVHGDAMELPFEDNSFDYVTIGFGLRNVPDYLVALKEMNRVLKPGGMVVCLETSQPTLPVFKQMYALYFKFVMPIFGKLFAKSKEEYEWLQQSTFNFPGKEELKRMFEEADFINVRVRSFTGGVAAMHLGYKEKDNTKGD.

Residues Thr-60, Asp-81, and 106–107 contribute to the S-adenosyl-L-methionine site; that span reads DA.

Belongs to the class I-like SAM-binding methyltransferase superfamily. MenG/UbiE family.

The catalysed reaction is a 2-demethylmenaquinol + S-adenosyl-L-methionine = a menaquinol + S-adenosyl-L-homocysteine + H(+). The protein operates within quinol/quinone metabolism; menaquinone biosynthesis; menaquinol from 1,4-dihydroxy-2-naphthoate: step 2/2. Functionally, methyltransferase required for the conversion of demethylmenaquinol (DMKH2) to menaquinol (MKH2). The polypeptide is Demethylmenaquinone methyltransferase (Staphylococcus aureus (strain MRSA252)).